Reading from the N-terminus, the 249-residue chain is Probable transcriptional regulatory protein Tgr7_2237 (249 aa).

The protein belongs to the TACO1 family.

Its subcellular location is the cytoplasm. This Thioalkalivibrio sulfidiphilus (strain HL-EbGR7) protein is Probable transcriptional regulatory protein Tgr7_2237.